We begin with the raw amino-acid sequence, 98 residues long: Class II hydrophobin 3 (98 aa).

Positions 1–18 (MQFTTTTLIAILSALAVA) are cleaved as a signal peptide. N-linked (GlcNAc...) asparagine glycans are attached at residues Asn-26 and Asn-54. 4 cysteine pairs are disulfide-bonded: Cys-35/Cys-83, Cys-44/Cys-74, Cys-45/Cys-57, and Cys-84/Cys-95.

It belongs to the cerato-ulmin hydrophobin family.

Its subcellular location is the secreted. It is found in the cell wall. Its function is as follows. Aerial growth, conidiation, and dispersal of filamentous fungi in the environment rely upon a capability of their secreting small amphipathic proteins called hydrophobins (HPBs) with low sequence identity. Class I can self-assemble into an outermost layer of rodlet bundles on aerial cell surfaces, conferring cellular hydrophobicity that supports fungal growth, development and dispersal; whereas Class II form highly ordered films at water-air interfaces through intermolecular interactions but contribute nothing to the rodlet structure. In Botryotinia fuckeliana, hydrophobins are not involved in conferring surface hydrophobicity to conidia and aerial hyphae and their function in sclerotia and fruiting bodies remains to be investigated. The polypeptide is Class II hydrophobin 3 (Botryotinia fuckeliana (strain B05.10) (Noble rot fungus)).